The following is a 131-amino-acid chain: Major pollen allergen Pla l 1 (131 aa).

Disulfide bonds link Cys17-Cys86, Cys20-Cys131, and Cys42-Cys74. His21, Asp45, Asp73, and Glu88 together coordinate Zn(2+). N-linked (GlcNAc...) asparagine glycosylation occurs at Asn107.

Belongs to the Ole e I family. Exists in two variants: glycosylated and non-glycosylated. Carries a complex, major N-linked glycan, with a alpha-1,3-fucose residue in its structure and probably also a beta-1,2-xylose. The average modification of molecular mass due to glycosylation is approximately 969 Da.

It localises to the secreted. This is Major pollen allergen Pla l 1 from Plantago lanceolata (English plantain).